Here is a 94-residue protein sequence, read N- to C-terminus: Pyrimidine/purine nucleoside phosphorylase (94 aa).

The protein belongs to the nucleoside phosphorylase PpnP family.

It catalyses the reaction a purine D-ribonucleoside + phosphate = a purine nucleobase + alpha-D-ribose 1-phosphate. The catalysed reaction is adenosine + phosphate = alpha-D-ribose 1-phosphate + adenine. The enzyme catalyses cytidine + phosphate = cytosine + alpha-D-ribose 1-phosphate. It carries out the reaction guanosine + phosphate = alpha-D-ribose 1-phosphate + guanine. It catalyses the reaction inosine + phosphate = alpha-D-ribose 1-phosphate + hypoxanthine. The catalysed reaction is thymidine + phosphate = 2-deoxy-alpha-D-ribose 1-phosphate + thymine. The enzyme catalyses uridine + phosphate = alpha-D-ribose 1-phosphate + uracil. It carries out the reaction xanthosine + phosphate = alpha-D-ribose 1-phosphate + xanthine. Its function is as follows. Catalyzes the phosphorolysis of diverse nucleosides, yielding D-ribose 1-phosphate and the respective free bases. Can use uridine, adenosine, guanosine, cytidine, thymidine, inosine and xanthosine as substrates. Also catalyzes the reverse reactions. This Salmonella newport (strain SL254) protein is Pyrimidine/purine nucleoside phosphorylase.